The sequence spans 461 residues: Fumarate hydratase class II (461 aa).

Substrate-binding positions include 97-99, 127-130, 137-139, and threonine 185; these read SGT, HPND, and SSN. The active-site Proton donor/acceptor is histidine 186. Serine 316 is an active-site residue. Substrate is bound by residues serine 317 and 322 to 324; that span reads KVN.

Belongs to the class-II fumarase/aspartase family. Fumarase subfamily. As to quaternary structure, homotetramer.

Its subcellular location is the cytoplasm. It catalyses the reaction (S)-malate = fumarate + H2O. The protein operates within carbohydrate metabolism; tricarboxylic acid cycle; (S)-malate from fumarate: step 1/1. Involved in the TCA cycle. Catalyzes the stereospecific interconversion of fumarate to L-malate. This is Fumarate hydratase class II from Oceanobacillus iheyensis (strain DSM 14371 / CIP 107618 / JCM 11309 / KCTC 3954 / HTE831).